A 256-amino-acid chain; its full sequence is Small ribosomal subunit protein uS2 (256 aa).

This sequence belongs to the universal ribosomal protein uS2 family.

This Streptococcus agalactiae serotype III (strain NEM316) protein is Small ribosomal subunit protein uS2.